A 434-amino-acid chain; its full sequence is Transcription factor AP-2-epsilon (434 aa).

Residues 30-123 (LNQGPYSSAP…GLSLDPRRDY (94 aa)) form a disordered region. Over residues 52-62 (PYFPPPYPQPP) the composition is skewed to pro residues. A PPxY motif motif is present at residues 53–58 (YFPPPY). Residues 81 to 97 (SSINSIHHQHQQPSWHT) are compositionally biased toward polar residues. Residues 278-408 (RRKAANVTLL…YLLESLKGMD (131 aa)) are H-S-H (helix-span-helix), dimerization. Residues 415 to 434 (TGNGHSAAESKSEKDIKHRK) form a disordered region. A compositionally biased stretch (basic and acidic residues) spans 422–434 (AESKSEKDIKHRK).

Belongs to the AP-2 family. In terms of assembly, binds DNA as a dimer. Can form homodimers or heterodimers with other AP-2 family members.

Its subcellular location is the nucleus. In terms of biological role, sequence-specific DNA-binding protein that interacts with inducible viral and cellular enhancer elements to regulate transcription of selected genes. AP-2 factors bind to the consensus sequence 5'-GCCNNNGGC-3' and activate genes involved in a large spectrum of important biological functions. This chain is Transcription factor AP-2-epsilon, found in Xenopus laevis (African clawed frog).